The sequence spans 321 residues: Glucokinase (321 aa).

8–13 (GDVGGT) provides a ligand contact to ATP.

The protein belongs to the bacterial glucokinase family.

It localises to the cytoplasm. It carries out the reaction D-glucose + ATP = D-glucose 6-phosphate + ADP + H(+). This chain is Glucokinase, found in Pectobacterium atrosepticum (strain SCRI 1043 / ATCC BAA-672) (Erwinia carotovora subsp. atroseptica).